Here is a 41-residue protein sequence, read N- to C-terminus: Large ribosomal subunit protein bL36 (41 aa).

The protein belongs to the bacterial ribosomal protein bL36 family.

This chain is Large ribosomal subunit protein bL36, found in Xanthomonas axonopodis pv. citri (strain 306).